Here is a 477-residue protein sequence, read N- to C-terminus: MGRTVVVLGGGISGLAASYYLSRAPCPPKVVLVEGSERLGGWIRSVRGPDGAIFELGPRGIRPAGALGARTLLLVSELGLDSEVLPVRGDHPAAQNRFLYVGGALHALPSGIRGLLRPSPPFSKPLFWAGLRDLTTPRGKDPDETVHSFAQRRLGPEVASLAMDSLCRGVFAGNSRELSIRSCFPSLFQAEQTHRSILLGLLLGAGRGPQLDSALIRQAQAERWSQWSLRGGLETLPQALHAHLTSRGVSVLQGQPVCGLSLQAEGRWKVSLEDSSLEADHIISAIPASVLSKLLPAEATPLARALSTITAVSVAVVNLQYRGARLPVQGFGHLVPSSEDPVILGIVYDSVAFPEQDGSLPGLRLTVMLGGSWLQTLEARGCVLSQELLQQEAEKAAATQLGLNEPPSHCLVHLHKNSIPQYTLGHWQKLESAAQFLAAQKLPLTLAGASYEGVAVNDCIESGRQAAARVLGTEPNS.

FAD is bound by residues 9 to 14 (GGGISG), tryptophan 42, 57 to 60 (GPRG), valine 257, alanine 449, and 454 to 456 (VAV).

Belongs to the protoporphyrinogen/coproporphyrinogen oxidase family. Protoporphyrinogen oxidase subfamily. As to quaternary structure, monomer. Homodimer. It depends on FAD as a cofactor. Detected in liver (at protein level).

It is found in the mitochondrion inner membrane. It carries out the reaction protoporphyrinogen IX + 3 O2 = protoporphyrin IX + 3 H2O2. Its pathway is porphyrin-containing compound metabolism; protoporphyrin-IX biosynthesis; protoporphyrin-IX from protoporphyrinogen-IX: step 1/1. Catalyzes the 6-electron oxidation of protoporphyrinogen-IX to form protoporphyrin-IX. The sequence is that of Protoporphyrinogen oxidase (PPOX) from Bos taurus (Bovine).